A 304-amino-acid polypeptide reads, in one-letter code: tRNA dimethylallyltransferase (304 aa).

10–17 (GPTASGKT) is a binding site for ATP. 12–17 (TASGKT) is a binding site for substrate. Interaction with substrate tRNA regions lie at residues 35 to 38 (DSAL), 159 to 163 (QRLSR), and 240 to 245 (RCVGYR).

It belongs to the IPP transferase family. Monomer. Mg(2+) serves as cofactor.

It catalyses the reaction adenosine(37) in tRNA + dimethylallyl diphosphate = N(6)-dimethylallyladenosine(37) in tRNA + diphosphate. Functionally, catalyzes the transfer of a dimethylallyl group onto the adenine at position 37 in tRNAs that read codons beginning with uridine, leading to the formation of N6-(dimethylallyl)adenosine (i(6)A). This chain is tRNA dimethylallyltransferase, found in Shewanella putrefaciens (strain CN-32 / ATCC BAA-453).